We begin with the raw amino-acid sequence, 58 residues long: U7-ctenitoxin-Pr1a (58 aa).

Intrachain disulfides connect cysteine 2–cysteine 16, cysteine 9–cysteine 22, cysteine 13–cysteine 48, cysteine 15–cysteine 40, cysteine 18–cysteine 55, and cysteine 24–cysteine 38.

Expressed by the venom gland.

The protein resides in the secreted. Its function is as follows. Probable neurotoxin. The protein is U7-ctenitoxin-Pr1a of Phoneutria reidyi (Brazilian Amazonian armed spider).